We begin with the raw amino-acid sequence, 537 residues long: Trypsin-resistant surface T6 protein (537 aa).

Positions 1-22 are cleaved as a signal peptide; that stretch reads MLACLAILAVVGLGMTRVSALS. The hydrophilic stretch occupies residues 310–330; sequence GNTYDNLDKKPDKGNGITSKE. An LPXTG sorting signal motif is present at residues 504–508; the sequence is LPSTG. Thr507 is modified (pentaglycyl murein peptidoglycan amidated threonine). Positions 508 to 537 are cleaved as a propeptide — removed by sortase; sequence GSIGTYLFKAIGSAAMIGAIGIYIVKRRKA.

It localises to the secreted. Its subcellular location is the cell wall. This Streptococcus pyogenes serotype M6 (strain ATCC BAA-946 / MGAS10394) protein is Trypsin-resistant surface T6 protein (tee6).